Consider the following 495-residue polypeptide: Ribose import ATP-binding protein RbsA 3 (495 aa).

ABC transporter domains lie at 5-240 and 250-492; these read VRLR…VGRE and AEIG…TGVK. Residue 37-44 coordinates ATP; it reads GENGAGKS.

This sequence belongs to the ABC transporter superfamily. Ribose importer (TC 3.A.1.2.1) family. As to quaternary structure, the complex is composed of an ATP-binding protein (RbsA), two transmembrane proteins (RbsC) and a solute-binding protein (RbsB).

The protein resides in the cell membrane. The catalysed reaction is D-ribose(out) + ATP + H2O = D-ribose(in) + ADP + phosphate + H(+). In terms of biological role, part of the ABC transporter complex RbsABC involved in ribose import. Responsible for energy coupling to the transport system. The chain is Ribose import ATP-binding protein RbsA 3 from Rubrobacter xylanophilus (strain DSM 9941 / JCM 11954 / NBRC 16129 / PRD-1).